A 567-amino-acid chain; its full sequence is Hexose transporter HXT15 (567 aa).

The segment covering 1 to 19 has biased composition (polar residues); it reads MASEQSSPEINADNLNSSA. The tract at residues 1–32 is disordered; sequence MASEQSSPEINADNLNSSAADVHVQPPGEKEW. The Cytoplasmic segment spans residues 1–55; that stretch reads MASEQSSPEINADNLNSSAADVHVQPPGEKEWSDGFYDKEVINGNTPDAPKRGFL. Residues 56-76 traverse the membrane as a helical segment; it reads GYLIIYLLCYPVSFGGFLPGW. Residues 77 to 112 lie on the Extracellular side of the membrane; it reads DSGITAGFINMDNFKMNFGSYKHSTGEYYLSNVRMG. A helical membrane pass occupies residues 113-133; it reads LLVAMFSVGCSIGGVAFARLA. Residues 134-139 lie on the Cytoplasmic side of the membrane; the sequence is DTLGRR. A helical membrane pass occupies residues 140-160; that stretch reads LAIVIVVLVYMVGAIIQISSN. Residues 161–170 are Extracellular-facing; sequence HKWYQYFVGK. The chain crosses the membrane as a helical span at residues 171–191; that stretch reads IIYGLGAGGCSVLCPMLLSEI. Residues 192 to 197 are Cytoplasmic-facing; the sequence is APTDLR. Residues 198 to 218 form a helical membrane-spanning segment; the sequence is GGLVSLYQLNMTFGIFLGYCS. Topologically, residues 219–232 are extracellular; sequence VYGTRKYSNTAQWR. The chain crosses the membrane as a helical span at residues 233 to 253; sequence IPVGLCFLWALIIIVGMLLVP. Topologically, residues 254 to 336 are cytoplasmic; sequence ESPRYLIECE…VQTFLQLTGE (83 aa). Residues 337 to 353 traverse the membrane as a helical segment; sequence NYFFFYGTTIFKSVGLT. The Extracellular portion of the chain corresponds to 354 to 359; the sequence is DGFETS. Residues 360–377 traverse the membrane as a helical segment; sequence IVLGTVNFFSTIIAVMVV. Residues 378 to 384 are Cytoplasmic-facing; sequence DKIGRRK. Residues 385–405 form a helical membrane-spanning segment; the sequence is CLLFGAASMMACMVIFASIGV. Residues 406-427 are Extracellular-facing; sequence KCLYPHGQDGPSSKGAGNAMIV. The helical transmembrane segment at 428-448 threads the bilayer; sequence FTCFYIFCFATTWAPVAYIVV. At 449-465 the chain is on the cytoplasmic side; sequence AESFPSKVKSKAMSIST. Residues 466-486 form a helical membrane-spanning segment; the sequence is AFNWLWQFLIGFFTPFITGSI. Position 487 (H487) is a topological domain, extracellular. A helical membrane pass occupies residues 488-508; the sequence is FYYGYVFVGCLVAMFLYVFFF. Topologically, residues 509 to 567 are cytoplasmic; the sequence is LPETIGLSLEEIQLLYEEGIKPWKSASWVPPSRRGASSRETEAKKKSWKEVLKFPKSFN. The tract at residues 533-555 is disordered; the sequence is SASWVPPSRRGASSRETEAKKKS. The segment covering 545-555 has biased composition (basic and acidic residues); the sequence is SSRETEAKKKS.

The protein belongs to the major facilitator superfamily. Sugar transporter (TC 2.A.1.1) family.

The protein resides in the membrane. Its function is as follows. Probable glucose transporter. This chain is Hexose transporter HXT15 (HXT15), found in Saccharomyces cerevisiae (strain ATCC 204508 / S288c) (Baker's yeast).